We begin with the raw amino-acid sequence, 59 residues long: Conorfamide-Ep1 (59 aa).

Positions 1–19 (MSGCGFLLLALLLLVTVEA) are cleaved as a signal peptide. A propeptide spanning residues 20–25 (TKMEKK) is cleaved from the precursor. Position 43 is an isoleucine amide (Ile-43). Residues 45–59 (RRDMQSPLLSERLRF) constitute a propeptide that is removed on maturation.

The protein belongs to the FARP (FMRFamide related peptide) family. Expressed by the venom duct.

Its subcellular location is the secreted. Its function is as follows. Neurotoxin that is active on vertebrates. When tested at high doses (10 uM), the toxin affects all zebrafish and mouse DRG neurons in culture, which could be an indication of an effect on a widely expressed receptor or ion channel found in both species. At low doses (1 uM), the effects of the toxin are confined to a specific subpopulation of zebrafish and mouse DRG neurons. In vivo, it induces long-lasting dramatic alterations in the locomotor behavior of zebrafish larvae. It rapidly induces hypoactivity and death of larvae at high doses and it causes hyperactivity at lower doses. In zebrafish adults, intramuscular injection causes the decrease of the movements and visited spaces. In mice, intracranial injection causes lethargy and prolonges sleeping phases and reduced movement. This chain is Conorfamide-Ep1, found in Conus episcopatus (Bishop's cone).